The following is a 178-amino-acid chain: Non-specific lipid transfer protein-like 1 (178 aa).

Positions 1-26 (MAVAARAAAVACLLVVGLAAVAGVDG) are cleaved as a signal peptide. Disulfide bonds link Cys-50–Cys-68 and Cys-69–Cys-110. A glycan (N-linked (GlcNAc...) asparagine) is linked at Asn-99. Ala-149 carries GPI-anchor amidated alanine lipidation. Residues 150–178 (AARSPMASTTAVLVVAAAVAAPLLAFFHF) constitute a propeptide, removed in mature form.

The protein belongs to the plant LTP family. Post-translationally, O-glycosylated on hydroxyprolines; noncontiguous hydroxylproline residues are glycosylated with arabinogalactan. In terms of tissue distribution, expressed in roots, stems, leaves, flowers and seeds.

It is found in the vacuole. Its subcellular location is the aleurone grain membrane. In Oryza sativa subsp. japonica (Rice), this protein is Non-specific lipid transfer protein-like 1 (LTPL1).